We begin with the raw amino-acid sequence, 287 residues long: MNKSIAPAPVVAAGDVKFGNSLPLSVIAGPCQLESRAHALEVASALKEIATRLGIGLVYKTSFDKANRTSAASARGIGLDAALAIFAEIRDSVGLPVLTDVHEAEQCARAAEAVDILQIPAFLCRQTDLLLAAAATGRIVNVKKGQFLAPWDMGNVVAKITTAGNQKVLVTERGASFGYNTLVSDMRALPIMARTTGAPVIFDATHSVQQPGGKGTSSGGEREFVPVLARAAVAVGVAGVFIETHPDPDHAPSDGPNMVPLRDFEALLRTLMEFDALAKKRPGAGTI.

Belongs to the KdsA family.

It localises to the cytoplasm. The enzyme catalyses D-arabinose 5-phosphate + phosphoenolpyruvate + H2O = 3-deoxy-alpha-D-manno-2-octulosonate-8-phosphate + phosphate. It functions in the pathway carbohydrate biosynthesis; 3-deoxy-D-manno-octulosonate biosynthesis; 3-deoxy-D-manno-octulosonate from D-ribulose 5-phosphate: step 2/3. Its pathway is bacterial outer membrane biogenesis; lipopolysaccharide biosynthesis. The protein is 2-dehydro-3-deoxyphosphooctonate aldolase of Rhodopseudomonas palustris (strain BisB5).